A 329-amino-acid chain; its full sequence is Acetyl-coenzyme A carboxylase carboxyl transferase subunit alpha (329 aa).

The CoA carboxyltransferase C-terminal domain occupies 40-294; it reads QLESLAARRR…RAALERHLGE (255 aa).

This sequence belongs to the AccA family. In terms of assembly, acetyl-CoA carboxylase is a heterohexamer composed of biotin carboxyl carrier protein (AccB), biotin carboxylase (AccC) and two subunits each of ACCase subunit alpha (AccA) and ACCase subunit beta (AccD).

It localises to the cytoplasm. The enzyme catalyses N(6)-carboxybiotinyl-L-lysyl-[protein] + acetyl-CoA = N(6)-biotinyl-L-lysyl-[protein] + malonyl-CoA. Its pathway is lipid metabolism; malonyl-CoA biosynthesis; malonyl-CoA from acetyl-CoA: step 1/1. Functionally, component of the acetyl coenzyme A carboxylase (ACC) complex. First, biotin carboxylase catalyzes the carboxylation of biotin on its carrier protein (BCCP) and then the CO(2) group is transferred by the carboxyltransferase to acetyl-CoA to form malonyl-CoA. The sequence is that of Acetyl-coenzyme A carboxylase carboxyl transferase subunit alpha from Parasynechococcus marenigrum (strain WH8102).